The primary structure comprises 143 residues: Large ribosomal subunit protein uL11 (143 aa).

This sequence belongs to the universal ribosomal protein uL11 family. As to quaternary structure, part of the ribosomal stalk of the 50S ribosomal subunit. Interacts with L10 and the large rRNA to form the base of the stalk. L10 forms an elongated spine to which L12 dimers bind in a sequential fashion forming a multimeric L10(L12)X complex. In terms of processing, one or more lysine residues are methylated.

In terms of biological role, forms part of the ribosomal stalk which helps the ribosome interact with GTP-bound translation factors. The polypeptide is Large ribosomal subunit protein uL11 (Verminephrobacter eiseniae (strain EF01-2)).